The sequence spans 159 residues: GDP-mannose mannosyl hydrolase (159 aa).

Residues 2–3 (FL), Phe8, and Arg36 each bind substrate. The Nudix hydrolase domain maps to 13–153 (RSTPLVSLDF…SRAYFLAEKR (141 aa)). 3 residues coordinate Mg(2+): Gly49, Glu69, and Gln122. A Nudix box motif is present at residues 50 to 71 (GRVQKDETLEAAFERLTMAELG).

As to quaternary structure, homodimer. Mg(2+) is required as a cofactor.

The catalysed reaction is GDP-alpha-D-mannose + H2O = D-mannose + GDP + H(+). Hydrolyzes both GDP-mannose and GDP-glucose. Could participate in the regulation of cell wall biosynthesis by influencing the concentration of GDP-mannose or GDP-glucose in the cell. Might also be involved in the biosynthesis of the slime polysaccharide colanic acid. This Escherichia coli (strain K12) protein is GDP-mannose mannosyl hydrolase.